The chain runs to 290 residues: Serine protease 27 (290 aa).

An N-terminal signal peptide occupies residues 1–22 (MRRPAAVPLLLLLCFGSQRAKA). Residues 23-34 (ATACGRPRMLNR) constitute a propeptide, activation peptide. The Peptidase S1 domain occupies 35–277 (MVGGQDTQEG…HHNWIHRIIP (243 aa)). The N-linked (GlcNAc...) asparagine glycan is linked to N55. An intrachain disulfide couples C60 to C76. The active-site Charge relay system is the H75. A glycan (N-linked (GlcNAc...) asparagine) is linked at N79. Catalysis depends on D124, which acts as the Charge relay system. 3 disulfides stabilise this stretch: C158–C235, C191–C214, and C225–C253. The active-site Charge relay system is the S229.

Belongs to the peptidase S1 family. In terms of processing, N-glycosylated. Expressed predominantly in the pancreas.

The protein resides in the secreted. The chain is Serine protease 27 (PRSS27) from Homo sapiens (Human).